The chain runs to 264 residues: Exodeoxyribonuclease YycJ (264 aa).

Residues histidine 58, histidine 60, aspartate 62, histidine 63, and aspartate 145 each contribute to the a divalent metal cation site.

The protein belongs to the metallo-beta-lactamase superfamily. The cofactor is Fe(2+). Zn(2+) is required as a cofactor. It depends on Mn(2+) as a cofactor.

Its function is as follows. 5'-&gt;3' double-stranded DNA exonuclease. May play a role in mutation mismatch repair (MMR). Required for accurate coordination of cell division with DNA replication. May play a role in cell wall metabolism. The sequence is that of Exodeoxyribonuclease YycJ from Bacillus anthracis.